The primary structure comprises 242 residues: Demethylmenaquinone methyltransferase (242 aa).

S-adenosyl-L-methionine-binding residues include threonine 74 and aspartate 93.

It belongs to the class I-like SAM-binding methyltransferase superfamily. MenG/UbiE family.

The enzyme catalyses a 2-demethylmenaquinol + S-adenosyl-L-methionine = a menaquinol + S-adenosyl-L-homocysteine + H(+). The protein operates within quinol/quinone metabolism; menaquinone biosynthesis; menaquinol from 1,4-dihydroxy-2-naphthoate: step 2/2. Its function is as follows. Methyltransferase required for the conversion of demethylmenaquinol (DMKH2) to menaquinol (MKH2). This chain is Demethylmenaquinone methyltransferase, found in Chlorobaculum tepidum (strain ATCC 49652 / DSM 12025 / NBRC 103806 / TLS) (Chlorobium tepidum).